The primary structure comprises 264 residues: uncharacterized protein (264 aa).

The signal sequence occupies residues 1-16; it reads MKGKSALTLLLAGIFS. Cys17 is lipidated: N-palmitoyl cysteine. Cys17 carries S-diacylglycerol cysteine lipidation.

The protein resides in the cell inner membrane. This is an uncharacterized protein from Escherichia coli (strain K12).